A 484-amino-acid chain; its full sequence is MKIAAIGGGVIGGGWIARFILAGHDVTVFDPHPEANRIVTEVMANAAEAWGRLYQSPLPKPGSINWASSIAEAVAGADYIQESVPERLDLKHRIIAEIEATASPQAIIASSTSGFKPSELREGSVHSERVIVAHPFNPVYLLPVVEVVGGGVAAQRASDILVSVGMKPVQIGREIDAHIGDRLLEAIWREALWLVKDGIATTQEIDDIIRYGFGLRWAQMGLFETYRIAGGEAGMRHFLAQFGPALKWPWTKLMDVPEFNDELIDLIAGQSDAQSGAYSIRELERIRDSNLIGIFHALKANDWGAGQTVKAMENRFYARNGKVQADYPLRLHEAHVNGGWVDYNGHMTEFRYLQVLGDATDALLIHIGLDADYRAAGHSAYTVETHIRHLAEVKAGARLTVETRLLGYDDKRLRLHHAILNEDGETVATGEHMLLHVDTKANRTVAMPPALMRALDHLNAQEEGPLPDHAGSGIRAVRLKETSA.

Positions 1–322 (MKIAAIGGGV…ENRFYARNGK (322 aa)) are L-carnitine dehydrogenase. 7 to 12 (GGGVIG) contributes to the NAD(+) binding site. Residues 323-484 (VQADYPLRLH…RAVRLKETSA (162 aa)) form a betainyl-CoA thioesterase region.

This sequence in the N-terminal section; belongs to the 3-hydroxyacyl-CoA dehydrogenase family. L-carnitine dehydrogenase subfamily. The protein in the C-terminal section; belongs to the betainyl-CoA thioesterase family. In terms of assembly, homodimer.

It localises to the cytoplasm. It catalyses the reaction carnitine + NAD(+) = 3-dehydrocarnitine + NADH + H(+). The enzyme catalyses N,N,N-trimethylglycyl-CoA + H2O = glycine betaine + CoA + H(+). It participates in amine and polyamine metabolism; carnitine metabolism. Functionally, multifunctional enzyme that catalyzes the NAD(+)-dependent oxidation of L-carnitine to 3-dehydrocarnitine and the cleavage of betainyl-CoA (N,N,N-trimethylglycyl-CoA) into glycine betaine and coenzyme A. The sequence is that of L-carnitine dehydrogenase/betainyl-CoA thioesterase from Agrobacterium fabrum (strain C58 / ATCC 33970) (Agrobacterium tumefaciens (strain C58)).